Here is a 378-residue protein sequence, read N- to C-terminus: Glutamate 5-kinase 1 (378 aa).

Residue lysine 13 coordinates ATP. The substrate site is built by serine 53, aspartate 140, and asparagine 152. 172–173 contacts ATP; the sequence is SD. In terms of domain architecture, PUA spans 278 to 355; it reads AGRLTVDAGA…AEIETVLGYE (78 aa).

It belongs to the glutamate 5-kinase family.

It is found in the cytoplasm. The enzyme catalyses L-glutamate + ATP = L-glutamyl 5-phosphate + ADP. The protein operates within amino-acid biosynthesis; L-proline biosynthesis; L-glutamate 5-semialdehyde from L-glutamate: step 1/2. Functionally, catalyzes the transfer of a phosphate group to glutamate to form L-glutamate 5-phosphate. This Mesorhizobium japonicum (strain LMG 29417 / CECT 9101 / MAFF 303099) (Mesorhizobium loti (strain MAFF 303099)) protein is Glutamate 5-kinase 1.